The sequence spans 519 residues: 3-octaprenyl-4-hydroxybenzoate carboxy-lyase (519 aa).

Residue Asn-177 coordinates Mn(2+). Residues 180–182, 194–196, and 199–200 contribute to the prenylated FMN site; these read IYR, RWL, and RG. Glu-243 is a Mn(2+) binding site. The active-site Proton donor is the Asp-318.

It belongs to the UbiD family. Homohexamer. Prenylated FMN is required as a cofactor. Mn(2+) serves as cofactor.

It localises to the cell membrane. The enzyme catalyses a 4-hydroxy-3-(all-trans-polyprenyl)benzoate + H(+) = a 2-(all-trans-polyprenyl)phenol + CO2. It functions in the pathway cofactor biosynthesis; ubiquinone biosynthesis. In terms of biological role, catalyzes the decarboxylation of 3-octaprenyl-4-hydroxy benzoate to 2-octaprenylphenol, an intermediate step in ubiquinone biosynthesis. The sequence is that of 3-octaprenyl-4-hydroxybenzoate carboxy-lyase from Burkholderia thailandensis (strain ATCC 700388 / DSM 13276 / CCUG 48851 / CIP 106301 / E264).